A 925-amino-acid polypeptide reads, in one-letter code: Probable disease resistance protein At1g61310 (925 aa).

Residues 25–69 adopt a coiled-coil conformation; sequence GKSYIRTLEKNLRALQREMEDLRATQHEVQNKVAREESRHQQRLE. Positions 134 to 154 are disordered; the sequence is NFDEVSQPPPRSEVEERPTQP. The NB-ARC domain occupies 139 to 442; sequence SQPPPRSEVE…CEGFIGEDQV (304 aa). 181–188 contributes to the ATP binding site; that stretch reads GMGGVGKT. 6 LRR repeats span residues 525-546, 547-568, 571-594, 595-617, 618-640, and 641-663; these read AVRRMSLMRNEIEEITCESKCS, ELTTLFLQSNQLKNLSGEFIRY, KLVVLDLSDNRDFNELPEQISGLV, SLQYLDLSFTRIEQLPVGLKELK, KLTFLDLAYTARLCSISGISRLL, and SLRVLSLLGSKVHGDASVLKELQ.

This sequence belongs to the disease resistance NB-LRR family.

In terms of biological role, probable disease resistance protein. This Arabidopsis thaliana (Mouse-ear cress) protein is Probable disease resistance protein At1g61310.